The chain runs to 100 residues: Small ribosomal subunit protein uS14c (100 aa).

The disordered stretch occupies residues 1-31; it reads MARKSLIQREKKRQKLEQKYHSIRRSSKKEI.

It belongs to the universal ribosomal protein uS14 family. In terms of assembly, part of the 30S ribosomal subunit.

The protein localises to the plastid. Its subcellular location is the chloroplast. In terms of biological role, binds 16S rRNA, required for the assembly of 30S particles. This is Small ribosomal subunit protein uS14c from Solanum bulbocastanum (Wild potato).